A 398-amino-acid polypeptide reads, in one-letter code: Streptopain (398 aa).

The signal sequence occupies residues 1-27; that stretch reads MNKKKLGVRLLSLLALGGFVLANPVFA. Residues 28 to 145 constitute a propeptide that is removed on maturation; the sequence is DQNFARNEKE…TTYAGTAEIK (118 aa). Cysteine 192 (nucleophile) is an active-site residue. Cysteine 192 is subject to Cysteine methyl disulfide; in zymogen form. Residues serine 282 and glycine 339 each contribute to the a protein site. Histidine 340 acts as the Proton acceptor in catalysis. The tract at residues 368 to 390 is C-terminal active site loop; that stretch reads RLDALNPSALGTGGGAGGFNGYQ.

Belongs to the peptidase C10 family. As to quaternary structure, monomer. In terms of processing, the mature protease is derived from the precursor sequence by cleavage, either in cis via an autocatalytic mechanism, or in trans by mature SpeB or host proteases (trypsin, plasmin or subtilisin). Maturation can involve a number of protein cleavage intermediates. Mature SpeB probably plays the most important role in protein maturation in physiological conditions. Post-translationally, methylthiolation at Cys-192 of the inactive zymogen form is probably involved in the mechanism of secretion of the proteinase into the culture fluid.

It localises to the secreted. The protein localises to the host extracellular space. Its subcellular location is the host cytoplasm. The enzyme catalyses Preferential cleavage with hydrophobic residues at P2, P1 and P1'.. Synthesized as an inactive zymogen to protect the intracellular components of the bacteria from proteolytic activity during protein production. Once secreted into the extracellular milieu, cleaved into the active protease: maturation can be mediated in cis by autocatalytic cleavage, or in trans by mature SpeB or host proteases. Protease activity is strongly inhibited by zinc and copper, which prevent its maturation into an active protease: inhibition by metal ions may be required to prevent proteolysis of streptococcal proteins. Cysteine protease that acts as a key streptococcal virulence factor by cleaving host proteins involved in immune response. Triggers inflammation by mediating cleavage of host proteins, which can both promote host pathogenesis by triggering sterile inflammation and/or restrict streptococcal infection, depending on host immune statue and infection site. Cleaves host gasdermin-A (GSDMA) in epithelial cells, promoting GSDMA activation and formation of gasdermin pores, triggering pyroptosis. Pyroptosis triggers the elimination of the infected skin cell, depriving the pathogen of its protective niche, while inducing an inflammatory response. This ultimately prevents bacterial penetration of the epithelial barrier and a subsequent systemic dissemination of the pathogen. Also mediates cleavage of the cytokine precursor interleukin-1 beta (IL1B) to its mature form, resulting in inflammation and septic shock. SpeB-mediated maturation of IL1B plays a dual role depending on infection site: while IL1B inflammatory response prevents bacterial growth during invasive skin infections, it promotes streptococcal infection of the nasopharynx by disrupting colonization resistance mediated by the microbiota. Inhibits host autophagy be catalyzing cleavage and inactivation of key autophagy factors, such as CALCOCO2, NBR1 and SQSTM1. Cleaves and inhibits a number of complement factors, such as C2, C3-beta chain of C3, C4, C5 or SERPING1, thereby promoting evasion of host immunity. May also impair adaptive immunity by catalyzing cleavage and degradation of host immunoglobulins to promote immune system evasion; the relevance of this activity is however unsure in vivo. Catalyzes maturation and release of the peptide hormone bradykinin from the precursor Kininogen-1 (KNG1) to produce hypotension during septic shock. Also involved in bacterial translocation across the host epithelial barrier by mediating cleavage and degradation of host epithelial junction proteins, such as CDH1 and OCLN. Additionally, has been involved in degradation of fibronectin and vitronectin, two host extracellular matrix proteins involved in tissue integrity. Also able to catalyze cleavage and degradation of streptococcal proteins, such as C5a peptidase, EndoS or SmeZ. Degradation of streptococcal proteins is however strictly regulated to preserve integrity of other virulence factors. The chain is Streptopain from Streptococcus pyogenes serotype M1.